The sequence spans 228 residues: Probable GTP-binding protein EngB (228 aa).

The EngB-type G domain maps to 48 to 222; it reads YGLEVAFVGY…QFVLNNWFSS (175 aa). Residues 56 to 63, 83 to 87, 101 to 104, 168 to 171, and 201 to 203 contribute to the GTP site; these read GYSNSGKS, GRTRL, DFPG, NKMD, and FSS. Mg(2+) is bound by residues Ser-63 and Thr-85.

This sequence belongs to the TRAFAC class TrmE-Era-EngA-EngB-Septin-like GTPase superfamily. EngB GTPase family. The cofactor is Mg(2+).

In terms of biological role, necessary for normal cell division and for the maintenance of normal septation. The polypeptide is Probable GTP-binding protein EngB (Buchnera aphidicola subsp. Baizongia pistaciae (strain Bp)).